Consider the following 826-residue polypeptide: Arsenite oxidase subunit AioA (826 aa).

Residues C22, C25, and C29 each coordinate [3Fe-4S] cluster. Substrate is bound by residues H196, E204, R420, and H424.

Belongs to the prokaryotic molybdopterin-containing oxidoreductase family. As to quaternary structure, heterodimer consisting of a large and a small subunit. The cofactor is [3Fe-4S] cluster. Requires Mo-bis(molybdopterin guanine dinucleotide) as cofactor.

The enzyme catalyses 2 oxidized [azurin] + arsenite + H2O = 2 reduced [azurin] + arsenate + 3 H(+). Functionally, involved in the detoxification of arsenic. Oxidizes As(III)O3(3-) (arsenite) to the somewhat less toxic As(V)O4(3-) (arsenate). The chain is Arsenite oxidase subunit AioA (aioA) from Alcaligenes faecalis.